Here is an 89-residue protein sequence, read N- to C-terminus: Small ribosomal subunit protein uS15 (89 aa).

Positions 1-11 are enriched in basic and acidic residues; the sequence is MSIAAERKAEV. Positions 1–25 are disordered; the sequence is MSIAAERKAEVIKTSANKPGDTGSP.

This sequence belongs to the universal ribosomal protein uS15 family. Part of the 30S ribosomal subunit. Forms a bridge to the 50S subunit in the 70S ribosome, contacting the 23S rRNA.

Functionally, one of the primary rRNA binding proteins, it binds directly to 16S rRNA where it helps nucleate assembly of the platform of the 30S subunit by binding and bridging several RNA helices of the 16S rRNA. In terms of biological role, forms an intersubunit bridge (bridge B4) with the 23S rRNA of the 50S subunit in the ribosome. In Nitrobacter winogradskyi (strain ATCC 25391 / DSM 10237 / CIP 104748 / NCIMB 11846 / Nb-255), this protein is Small ribosomal subunit protein uS15.